The sequence spans 247 residues: ATP synthase subunit a, chloroplastic (247 aa).

The next 5 helical transmembrane spans lie at 38-58 (QVLI…TIAV), 95-115 (VPFI…GALL), 134-154 (INTT…AGLT), 199-219 (LVVV…VMFL), and 220-240 (GLFT…AYIG).

It belongs to the ATPase A chain family. F-type ATPases have 2 components, CF(1) - the catalytic core - and CF(0) - the membrane proton channel. CF(1) has five subunits: alpha(3), beta(3), gamma(1), delta(1), epsilon(1). CF(0) has four main subunits: a, b, b' and c.

The protein resides in the plastid. Its subcellular location is the chloroplast thylakoid membrane. Its function is as follows. Key component of the proton channel; it plays a direct role in the translocation of protons across the membrane. This chain is ATP synthase subunit a, chloroplastic, found in Buxus microphylla (Littleleaf boxwood).